The following is a 402-amino-acid chain: Myb-related protein 1 (402 aa).

The region spanning 42-102 (TDAKPRLKWT…HLQKYRLSKN (61 aa)) is the HTH myb-type domain. A DNA-binding region (H-T-H motif) is located at residues 73 to 98 (PKTIMKVMGIPGLTLYHLKSHLQKYR). Residues 148-168 (SDALQMQIEVQRRLHEQLEVQ) adopt a coiled-coil conformation. Residues 161–166 (LHEQLE) carry the LHEQLE motif. A compositionally biased stretch (polar residues) spans 238–260 (QQMQKTYPPNSSLDSCLTSSEGT). Disordered stretches follow at residues 238–266 (QQMQKTYPPNSSLDSCLTSSEGTQKAPKM), 344–363 (EHRGRSSNNSEYTEERFNEN), and 382–402 (HDENYGTTRPKQFDLNGFSWN).

It belongs to the MYB-CC family. As to quaternary structure, isoforms 1 and 2: homodimer. Isoform 3: loss of dimerization. In terms of tissue distribution, expressed in phloem and/or cambium.

The protein resides in the nucleus. In terms of biological role, transcription factor that may act on the GAL1 promoter. Acts redundantly with MYR2 as a repressor of flowering and organ elongation under decreased light intensity. Represses gibberellic acid (GA)-dependent responses and affects levels of bioactive GA. This Arabidopsis thaliana (Mouse-ear cress) protein is Myb-related protein 1.